We begin with the raw amino-acid sequence, 320 residues long: Beta-sarcoglycan (320 aa).

The span at M1–A10 shows a compositional bias: low complexity. Residues M1–V34 are disordered. Topologically, residues M1–A67 are cytoplasmic. The segment covering S23 to V34 has biased composition (basic and acidic residues). Residues I68 to I88 form a helical; Signal-anchor for type II membrane protein membrane-spanning segment. Residues W89–H320 lie on the Extracellular side of the membrane. N160, N213, and N260 each carry an N-linked (GlcNAc...) asparagine glycan. Disulfide bonds link C290–C316 and C292–C309.

This sequence belongs to the sarcoglycan beta/delta/gamma/zeta family. In terms of assembly, cross-link to form 2 major subcomplexes: one consisting of SGCB, SGCD and SGCG and the other consisting of SGCB and SGCD. The association between SGCB and SGCG is particularly strong while SGCA is loosely associated with the other sarcoglycans. In terms of processing, disulfide bonds are present. In terms of tissue distribution, most strongly expressed in skeletal and heart muscle. Also detected in proliferating myoblasts.

Its subcellular location is the cell membrane. The protein resides in the sarcolemma. It is found in the cytoplasm. The protein localises to the cytoskeleton. Functionally, component of the sarcoglycan complex, a subcomplex of the dystrophin-glycoprotein complex which forms a link between the F-actin cytoskeleton and the extracellular matrix. The chain is Beta-sarcoglycan (Sgcb) from Mus musculus (Mouse).